Here is a 341-residue protein sequence, read N- to C-terminus: Heterogeneous nuclear ribonucleoproteins A2/B1 (341 aa).

RRM domains lie at 9 to 92 (RKLF…ESGK) and 100 to 179 (KKLF…LSRQ). A Glycyl lysine isopeptide (Lys-Gly) (interchain with G-Cter in SUMO2) cross-link involves residue Lys-10. Position 17 is a phosphoserine (Ser-17). Arg-26 carries the omega-N-methylarginine modification. At Ser-73 the chain carries Phosphoserine. Lys-92 bears the N6,N6-dimethyllysine; alternate mark. Residue Lys-92 forms a Glycyl lysine isopeptide (Lys-Gly) (interchain with G-Cter in SUMO2); alternate linkage. Glycyl lysine isopeptide (Lys-Gly) (interchain with G-Cter in SUMO2) cross-links involve residues Lys-100, Lys-108, and Lys-125. Thr-128 is modified (phosphothreonine). A Phosphoserine modification is found at Ser-137. Lys-140 participates in a covalent cross-link: Glycyl lysine isopeptide (Lys-Gly) (interchain with G-Cter in SUMO2). Phosphothreonine is present on Thr-147. Residues Lys-156 and Lys-161 each participate in a glycyl lysine isopeptide (Lys-Gly) (interchain with G-Cter in SUMO2); alternate cross-link. Lys-156 and Lys-161 each carry N6-acetyllysine; alternate. Position 164 is a phosphothreonine (Thr-164). Residue Lys-174 forms a Glycyl lysine isopeptide (Lys-Gly) (interchain with G-Cter in SUMO2) linkage. 2 positions are modified to phosphoserine: Ser-177 and Ser-189. The segment at 181–341 (MQEVQSSRSG…SGGYGGRSRY (161 aa)) is disordered. Positions 190-211 (GRGGNFGFGDSRGGGGNFGPGP) are enriched in gly residues. An Asymmetric dimethylarginine; alternate modification is found at Arg-191. Arg-191 carries the post-translational modification Dimethylated arginine; alternate. Arg-191 is subject to Omega-N-methylarginine; alternate. The residue at position 200 (Ser-200) is a Phosphoserine. Asymmetric dimethylarginine; alternate is present on Arg-201. Residue Arg-201 is modified to Dimethylated arginine; alternate. Arg-201 bears the Omega-N-methylarginine; alternate mark. Residue Ser-213 is modified to Phosphoserine. The residue at position 216 (Arg-216) is an Omega-N-methylarginine. Ser-219 and Ser-224 each carry phosphoserine. The residue at position 226 (Arg-226) is an Omega-N-methylarginine. A Phosphoserine modification is found at Ser-247. The residue at position 254 (Arg-254) is an Asymmetric dimethylarginine; alternate. Arg-254 is subject to Omega-N-methylarginine; alternate. The segment at 296–335 (QQPSNYGPMKSGNFGGSRNMGGPYGGGNYGPGGSGGSGGY) is nuclear targeting sequence. Gly residues predominate over residues 308-341 (NFGGSRNMGGPYGGGNYGPGGSGGSGGYGGRSRY). At Ser-312 the chain carries Phosphoserine. Arg-313 is subject to Omega-N-methylarginine. Tyr-319 is modified (phosphotyrosine). Phosphoserine occurs at positions 329 and 332. Tyr-335 is subject to Phosphotyrosine. At Arg-338 the chain carries Omega-N-methylarginine.

As to quaternary structure, identified in the spliceosome C complex. Identified in a IGF2BP1-dependent mRNP granule complex containing untranslated mRNAs. Interacts with IGF2BP1. Interacts with C9orf72. Interacts with DGCR8. Interacts with TARDBP. Interacts with CKAP5. Interacts with PPIA/CYPA. Interacts (via C-terminus) with FAM76B; the interaction results in retention of HNRNPA2B1 in the nucleus and inhibition of the NF-kappa-B-mediated inflammatory pathway. Interacts with NF-kappa-B inhibitors NFKBIA and NFKBIE; the interaction may be mediated by the RRM2 domain of HNRNPA2B1, and HNRNPA2B1 may interact simultaneously with FAM76B and either NFKBIA or NFKBIE to form a complex. In terms of processing, sumoylated in exosomes, promoting miRNAs-binding. Post-translationally, asymmetric dimethylation at Arg-254 constitutes the major methylation site. According to a report, methylation affects subcellular location and promotes nuclear localization. According to another report, methylation at Arg-254 does not influence nucleocytoplasmic shuttling.

It localises to the nucleus. Its subcellular location is the nucleoplasm. It is found in the cytoplasmic granule. The protein resides in the secreted. The protein localises to the extracellular exosome. Its function is as follows. Heterogeneous nuclear ribonucleoprotein (hnRNP) that associates with nascent pre-mRNAs, packaging them into hnRNP particles. The hnRNP particle arrangement on nascent hnRNA is non-random and sequence-dependent and serves to condense and stabilize the transcripts and minimize tangling and knotting. Packaging plays a role in various processes such as transcription, pre-mRNA processing, RNA nuclear export, subcellular location, mRNA translation and stability of mature mRNAs. Forms hnRNP particles with at least 20 other different hnRNP and heterogeneous nuclear RNA in the nucleus. Involved in transport of specific mRNAs to the cytoplasm in oligodendrocytes and neurons: acts by specifically recognizing and binding the A2RE (21 nucleotide hnRNP A2 response element) or the A2RE11 (derivative 11 nucleotide oligonucleotide) sequence motifs present on some mRNAs, and promotes their transport to the cytoplasm. Specifically binds single-stranded telomeric DNA sequences, protecting telomeric DNA repeat against endonuclease digestion. Also binds other RNA molecules, such as primary miRNA (pri-miRNAs): acts as a nuclear 'reader' of the N6-methyladenosine (m6A) mark by specifically recognizing and binding a subset of nuclear m6A-containing pri-miRNAs. Binding to m6A-containing pri-miRNAs promotes pri-miRNA processing by enhancing binding of DGCR8 to pri-miRNA transcripts. Involved in miRNA sorting into exosomes following sumoylation, possibly by binding (m6A)-containing pre-miRNAs. Acts as a regulator of efficiency of mRNA splicing, possibly by binding to m6A-containing pre-mRNAs. Plays a role in the splicing of pyruvate kinase PKM by binding repressively to sequences flanking PKM exon 9, inhibiting exon 9 inclusion and resulting in exon 10 inclusion and production of the PKM M2 isoform. This is Heterogeneous nuclear ribonucleoproteins A2/B1 (HNRNPA2B1) from Saguinus oedipus (Cotton-top tamarin).